Reading from the N-terminus, the 98-residue chain is NADH-ubiquinone oxidoreductase chain 4L (98 aa).

Helical transmembrane passes span 1-21, 29-49, and 61-81; these read MPYI…GTLM, SLLC…LLSL, and LILL…LVMI.

It belongs to the complex I subunit 4L family. In terms of assembly, core subunit of respiratory chain NADH dehydrogenase (Complex I) which is composed of 45 different subunits.

It is found in the mitochondrion inner membrane. The catalysed reaction is a ubiquinone + NADH + 5 H(+)(in) = a ubiquinol + NAD(+) + 4 H(+)(out). Functionally, core subunit of the mitochondrial membrane respiratory chain NADH dehydrogenase (Complex I) which catalyzes electron transfer from NADH through the respiratory chain, using ubiquinone as an electron acceptor. Part of the enzyme membrane arm which is embedded in the lipid bilayer and involved in proton translocation. The sequence is that of NADH-ubiquinone oxidoreductase chain 4L (MT-ND4L) from Elephas maximus (Indian elephant).